A 938-amino-acid chain; its full sequence is MPSLEPWLWGDSCSWLGMLAMLRLRLHKSNMDFTCLFCCSLAFVLYLNTLGAGFVYDDRRAILANADVSGGTPWQRSFSNDFWGTPLTDSGSHGSWRPLCVLSFRLNYLIGGGFAPWGFHLVNNLLHCVATALVVRVARTLLASVWAVLAAGALFAAHPIHTEAVAGVVGRADLAACVCYLLTYLSYLRHMRWRESGDPRQWLALGATLILAAAGLLCKETAITALLVCALFDVMRGLSGQVDKQRLRSVCIVLGALFCMAYCRLVIVPGPQTAFSSADNPIARTPSAWTRLLTFLYLPVFNLRLLLQPNVLSFDWGMDALPRVTSLWDRRNAQSACFYSVLVGVAWGSCRQLLSGSKEVTHCGVSSTFPQYHIQKVASRKSRSKRKRLANNTKYQAFEAAYHQQQQEALPCRDCNNNNSSGYVYEGSSPVAQAPAQAPHLVSSAFRGSRSSSSCSNSTNSSSSSSSSSSSSSSSSSSLSGGFQCSSKDYALEGMSPANRHACVLIMSLSFLALPFLPASNLLFYVGFVVAERLLYLPSVGFCLLVGYGVSKLMSCNQRTRNILLLSFSLLLAAMSLRTLRRNADWRDEESLYRSAIAINPPKALGNLGSVLSSQGRYEEAKQVLQEAIRFRPNMADVHFNLGILHQNQQVYPAAVECFQRAIKFRPNLAVAYLNLGISFIALGKRQQAIEILQAGSNLDGAAVRDRTAHDQARSSAYLQLGALYVEQGKLQRALAIYREALSSLPGLPQQREILYQRIGDVLGRLQQWDEAERHHRAALELQPNQVAAHLSYGITLARNSSRASEAEMWFKRALKLAPEQASVYHHYAEFLSLQSRHHESAIYHRRAAELAPNDYTLVVAAATAMRLLDRKVDAEMWYRKAVALRPGDAHAHTNLGAILHLLGRTNHAAASYKAALRLQPGDAITLGNLAKLGVTNV.

M1 is a topological domain (cytoplasmic). Residues 2–22 (PSLEPWLWGDSCSWLGMLAML) traverse the membrane as a helical segment. The Extracellular portion of the chain corresponds to 23 to 34 (RLRLHKSNMDFT). Residues 35–55 (CLFCCSLAFVLYLNTLGAGFV) form a helical membrane-spanning segment. The Cytoplasmic segment spans residues 56-108 (YDDRRAILANADVSGGTPWQRSFSNDFWGTPLTDSGSHGSWRPLCVLSFRLNY). A helical transmembrane segment spans residues 109 to 129 (LIGGGFAPWGFHLVNNLLHCV). The Extracellular portion of the chain corresponds to 130 to 139 (ATALVVRVAR). A helical transmembrane segment spans residues 140 to 160 (TLLASVWAVLAAGALFAAHPI). Topologically, residues 161–164 (HTEA) are cytoplasmic. A helical membrane pass occupies residues 165–185 (VAGVVGRADLAACVCYLLTYL). At 186-208 (SYLRHMRWRESGDPRQWLALGAT) the chain is on the extracellular side. Residues 209-229 (LILAAAGLLCKETAITALLVC) form a helical membrane-spanning segment. At 230–249 (ALFDVMRGLSGQVDKQRLRS) the chain is on the cytoplasmic side. A helical transmembrane segment spans residues 250-270 (VCIVLGALFCMAYCRLVIVPG). Residues 271–291 (PQTAFSSADNPIARTPSAWTR) are Extracellular-facing. The chain crosses the membrane as a helical span at residues 292 to 312 (LLTFLYLPVFNLRLLLQPNVL). Over 313 to 510 (SFDWGMDALP…HACVLIMSLS (198 aa)) the chain is Cytoplasmic. The segment at 450–480 (RSSSSCSNSTNSSSSSSSSSSSSSSSSSSLS) is disordered. A helical membrane pass occupies residues 511–531 (FLALPFLPASNLLFYVGFVVA). At 532 to 533 (ER) the chain is on the extracellular side. Residues 534-554 (LLYLPSVGFCLLVGYGVSKLM) form a helical membrane-spanning segment. The Cytoplasmic portion of the chain corresponds to 555–562 (SCNQRTRN). A helical transmembrane segment spans residues 563-580 (ILLLSFSLLLAAMSLRTL). The Extracellular segment spans residues 581–938 (RRNADWRDEE…NLAKLGVTNV (358 aa)). 9 TPR repeats span residues 602-635 (PKAL…RPNM), 636-669 (ADVH…RPNL), 670-703 (AVAY…DGAA), 715-748 (SSAY…LPGL), 753-786 (EILY…QPNQ), 788-821 (AAHL…APEQ), 822-855 (ASVY…APND), 856-889 (YTLV…RPGD), and 890-923 (AHAH…QPGD). Residue N800 is glycosylated (N-linked (GlcNAc...) asparagine).

It belongs to the TMTC family.

Its subcellular location is the membrane. The protein resides in the endoplasmic reticulum. The enzyme catalyses a di-trans,poly-cis-dolichyl beta-D-mannosyl phosphate + L-seryl-[protein] = 3-O-(alpha-D-mannosyl)-L-seryl-[protein] + a di-trans,poly-cis-dolichyl phosphate + H(+). It carries out the reaction a di-trans,poly-cis-dolichyl beta-D-mannosyl phosphate + L-threonyl-[protein] = 3-O-(alpha-D-mannosyl)-L-threonyl-[protein] + a di-trans,poly-cis-dolichyl phosphate + H(+). It participates in protein modification; protein glycosylation. In terms of biological role, transfers mannosyl residues to the hydroxyl group of serine or threonine residues. This Drosophila melanogaster (Fruit fly) protein is Protein O-mannosyl-transferase Tmtc2.